The sequence spans 572 residues: Urease subunit alpha (572 aa).

A Urease domain is found at 134–572 (AGIDSHIHLI…AAMNQRYFFG (439 aa)). 3 residues coordinate Ni(2+): His-139, His-141, and Lys-222. Lys-222 carries the post-translational modification N6-carboxylysine. His-224 contributes to the substrate binding site. His-251 and His-277 together coordinate Ni(2+). The Proton donor role is filled by His-325. Asp-365 is a Ni(2+) binding site.

The protein belongs to the metallo-dependent hydrolases superfamily. Urease alpha subunit family. In terms of assembly, heterotrimer of UreA (gamma), UreB (beta) and UreC (alpha) subunits. Three heterotrimers associate to form the active enzyme. The cofactor is Ni cation. In terms of processing, carboxylation allows a single lysine to coordinate two nickel ions.

It localises to the cytoplasm. It carries out the reaction urea + 2 H2O + H(+) = hydrogencarbonate + 2 NH4(+). It functions in the pathway nitrogen metabolism; urea degradation; CO(2) and NH(3) from urea (urease route): step 1/1. The polypeptide is Urease subunit alpha (Yersinia enterocolitica serotype O:8 / biotype 1B (strain NCTC 13174 / 8081)).